A 260-amino-acid chain; its full sequence is Flap endonuclease Xni (260 aa).

Aspartate 109 contributes to the Mg(2+) binding site. The 5'-3' exonuclease domain occupies 165–259 (VKPSQLADYW…DIRFTGPNKA (95 aa)). K(+)-binding residues include leucine 176, proline 185, valine 187, and isoleucine 190. Residues 189–194 (GIGPKA) are interaction with DNA.

It belongs to the Xni family. Mg(2+) serves as cofactor. K(+) is required as a cofactor.

In terms of biological role, has flap endonuclease activity. During DNA replication, flap endonucleases cleave the 5'-overhanging flap structure that is generated by displacement synthesis when DNA polymerase encounters the 5'-end of a downstream Okazaki fragment. The polypeptide is Flap endonuclease Xni (Vibrio parahaemolyticus serotype O3:K6 (strain RIMD 2210633)).